A 284-amino-acid chain; its full sequence is Shikimate dehydrogenase (NADP(+)) (284 aa).

Shikimate contacts are provided by residues serine 20–serine 22 and serine 67. Lysine 71 acts as the Proton acceptor in catalysis. An NADP(+)-binding site is contributed by aspartate 83. Shikimate contacts are provided by asparagine 92 and aspartate 107. NADP(+) contacts are provided by residues glycine 129–alanine 133 and isoleucine 227. Tyrosine 229 lines the shikimate pocket. Glycine 250 contributes to the NADP(+) binding site.

It belongs to the shikimate dehydrogenase family. In terms of assembly, homodimer.

It carries out the reaction shikimate + NADP(+) = 3-dehydroshikimate + NADPH + H(+). It functions in the pathway metabolic intermediate biosynthesis; chorismate biosynthesis; chorismate from D-erythrose 4-phosphate and phosphoenolpyruvate: step 4/7. Functionally, involved in the biosynthesis of the chorismate, which leads to the biosynthesis of aromatic amino acids. Catalyzes the reversible NADPH linked reduction of 3-dehydroshikimate (DHSA) to yield shikimate (SA). This Streptococcus pneumoniae (strain JJA) protein is Shikimate dehydrogenase (NADP(+)).